The following is a 141-amino-acid chain: uncharacterized protein (141 aa).

2 helical membrane passes run 41–61 (LIMLLVAICSSLSGNTVNYLF) and 95–115 (IIFLISFPFWGCFVSLFSGFF).

The protein localises to the cell membrane. This is an uncharacterized protein from Rickettsia prowazekii (strain Madrid E).